A 339-amino-acid chain; its full sequence is Ketol-acid reductoisomerase (NADP(+)) (339 aa).

Positions 1 to 182 constitute a KARI N-terminal Rossmann domain; it reads MRVYYDRDAD…GGGRAGIIET (182 aa). NADP(+) contacts are provided by residues 24–27, R48, S51, T53, and 83–86; these read YGSQ and DELQ. Residue H108 is part of the active site. Position 134 (G134) interacts with NADP(+). In terms of domain architecture, KARI C-terminal knotted spans 183–328; the sequence is TFKEECETDL…AKLRGMMPWI (146 aa). The Mg(2+) site is built by D191, E195, E227, and E231. Substrate is bound at residue S252.

This sequence belongs to the ketol-acid reductoisomerase family. Mg(2+) is required as a cofactor.

It catalyses the reaction (2R)-2,3-dihydroxy-3-methylbutanoate + NADP(+) = (2S)-2-acetolactate + NADPH + H(+). The enzyme catalyses (2R,3R)-2,3-dihydroxy-3-methylpentanoate + NADP(+) = (S)-2-ethyl-2-hydroxy-3-oxobutanoate + NADPH + H(+). Its pathway is amino-acid biosynthesis; L-isoleucine biosynthesis; L-isoleucine from 2-oxobutanoate: step 2/4. The protein operates within amino-acid biosynthesis; L-valine biosynthesis; L-valine from pyruvate: step 2/4. Involved in the biosynthesis of branched-chain amino acids (BCAA). Catalyzes an alkyl-migration followed by a ketol-acid reduction of (S)-2-acetolactate (S2AL) to yield (R)-2,3-dihydroxy-isovalerate. In the isomerase reaction, S2AL is rearranged via a Mg-dependent methyl migration to produce 3-hydroxy-3-methyl-2-ketobutyrate (HMKB). In the reductase reaction, this 2-ketoacid undergoes a metal-dependent reduction by NADPH to yield (R)-2,3-dihydroxy-isovalerate. The protein is Ketol-acid reductoisomerase (NADP(+)) of Methylobacterium radiotolerans (strain ATCC 27329 / DSM 1819 / JCM 2831 / NBRC 15690 / NCIMB 10815 / 0-1).